Consider the following 660-residue polypeptide: DNA ligase (660 aa).

Residues Asp32–Asp36, Ser81–Met82, and Glu112 each bind NAD(+). The N6-AMP-lysine intermediate role is filled by Lys114. NAD(+) is bound by residues Arg135, Glu169, Lys284, and Lys308. Residues Cys402, Cys405, Cys418, and Cys423 each coordinate Zn(2+). Residues Val578–Ala660 enclose the BRCT domain.

Belongs to the NAD-dependent DNA ligase family. LigA subfamily. Requires Mg(2+) as cofactor. It depends on Mn(2+) as a cofactor.

The enzyme catalyses NAD(+) + (deoxyribonucleotide)n-3'-hydroxyl + 5'-phospho-(deoxyribonucleotide)m = (deoxyribonucleotide)n+m + AMP + beta-nicotinamide D-nucleotide.. Its function is as follows. DNA ligase that catalyzes the formation of phosphodiester linkages between 5'-phosphoryl and 3'-hydroxyl groups in double-stranded DNA using NAD as a coenzyme and as the energy source for the reaction. It is essential for DNA replication and repair of damaged DNA. This chain is DNA ligase, found in Nitratiruptor sp. (strain SB155-2).